A 444-amino-acid polypeptide reads, in one-letter code: uncharacterized protein (444 aa).

The 218-residue stretch at 164 to 381 folds into the Radical SAM core domain; that stretch reads GAYGKSFLLE…EKALKKEGIR (218 aa). Residues Cys178, Cys182, and Cys185 each coordinate [4Fe-4S] cluster.

It depends on [4Fe-4S] cluster as a cofactor.

This is an uncharacterized protein from Methanocaldococcus jannaschii (strain ATCC 43067 / DSM 2661 / JAL-1 / JCM 10045 / NBRC 100440) (Methanococcus jannaschii).